The sequence spans 808 residues: Digalactosyldiacylglycerol synthase 1, chloroplastic (808 aa).

Positions 1-23 (MVKETLIPPSSTSMTTGTSSSSS) are disordered. The N-terminal 58 residues, 1-58 (MVKETLIPPSSTSMTTGTSSSSSLSMTLSSTNALSFLSKGWREVWDSADADLQLMRDR), are a transit peptide targeting the chloroplast. A compositionally biased stretch (low complexity) spans 10 to 23 (SSTSMTTGTSSSSS).

The protein belongs to the glycosyltransferase group 1 family. Glycosyltransferase 4 subfamily.

The protein resides in the plastid. It localises to the chloroplast outer membrane. The catalysed reaction is a 1,2-diacyl-3-O-(beta-D-galactosyl)-sn-glycerol + UDP-alpha-D-galactose = a 1,2-diacyl-3-O-[alpha-D-galactosyl-(1-&gt;6)-beta-D-galactosyl]-sn-glycerol + UDP + H(+). Functionally, involved in the synthesis of diacylglycerol galactolipids that are specifically found in thylakoid membranes. Specific for alpha-glycosidic linkages. Responsible for the final assembly of galactolipids in photosynthetic membranes. Digalactosyldiacylglycerol (DGDG) provides stability to the photosystem I (PSI) complex, especially to the PsaA, PsaB, PsaC, PsaL and PsaH subunits. This chain is Digalactosyldiacylglycerol synthase 1, chloroplastic, found in Arabidopsis thaliana (Mouse-ear cress).